Reading from the N-terminus, the 247-residue chain is Nodulation protein H (247 aa).

Residues M1 to P17 are hydrophobic.

Functionally, required for the formation of sulfated nod factor. Proposed to transfer activated sulfate (PAPS) to a N-acetylglucosamine of the nod factor. This is Nodulation protein H (nodH) from Rhizobium meliloti (strain 1021) (Ensifer meliloti).